A 188-amino-acid chain; its full sequence is Elongation factor P (188 aa).

It belongs to the elongation factor P family.

The protein resides in the cytoplasm. Its pathway is protein biosynthesis; polypeptide chain elongation. Functionally, involved in peptide bond synthesis. Stimulates efficient translation and peptide-bond synthesis on native or reconstituted 70S ribosomes in vitro. Probably functions indirectly by altering the affinity of the ribosome for aminoacyl-tRNA, thus increasing their reactivity as acceptors for peptidyl transferase. The chain is Elongation factor P from Exiguobacterium sibiricum (strain DSM 17290 / CCUG 55495 / CIP 109462 / JCM 13490 / 255-15).